Here is a 209-residue protein sequence, read N- to C-terminus: Thiamine-phosphate synthase (209 aa).

4-amino-2-methyl-5-(diphosphooxymethyl)pyrimidine-binding positions include 39–43 (QLREK) and asparagine 71. Mg(2+) contacts are provided by aspartate 72 and aspartate 91. Position 110 (serine 110) interacts with 4-amino-2-methyl-5-(diphosphooxymethyl)pyrimidine. 136–138 (TGT) provides a ligand contact to 2-[(2R,5Z)-2-carboxy-4-methylthiazol-5(2H)-ylidene]ethyl phosphate. Residue lysine 139 coordinates 4-amino-2-methyl-5-(diphosphooxymethyl)pyrimidine. 2-[(2R,5Z)-2-carboxy-4-methylthiazol-5(2H)-ylidene]ethyl phosphate-binding positions include glycine 166 and 186–187 (VS).

Belongs to the thiamine-phosphate synthase family. Mg(2+) is required as a cofactor.

It carries out the reaction 2-[(2R,5Z)-2-carboxy-4-methylthiazol-5(2H)-ylidene]ethyl phosphate + 4-amino-2-methyl-5-(diphosphooxymethyl)pyrimidine + 2 H(+) = thiamine phosphate + CO2 + diphosphate. The enzyme catalyses 2-(2-carboxy-4-methylthiazol-5-yl)ethyl phosphate + 4-amino-2-methyl-5-(diphosphooxymethyl)pyrimidine + 2 H(+) = thiamine phosphate + CO2 + diphosphate. The catalysed reaction is 4-methyl-5-(2-phosphooxyethyl)-thiazole + 4-amino-2-methyl-5-(diphosphooxymethyl)pyrimidine + H(+) = thiamine phosphate + diphosphate. It participates in cofactor biosynthesis; thiamine diphosphate biosynthesis; thiamine phosphate from 4-amino-2-methyl-5-diphosphomethylpyrimidine and 4-methyl-5-(2-phosphoethyl)-thiazole: step 1/1. In terms of biological role, condenses 4-methyl-5-(beta-hydroxyethyl)thiazole monophosphate (THZ-P) and 2-methyl-4-amino-5-hydroxymethyl pyrimidine pyrophosphate (HMP-PP) to form thiamine monophosphate (TMP). This chain is Thiamine-phosphate synthase, found in Clostridium beijerinckii (strain ATCC 51743 / NCIMB 8052) (Clostridium acetobutylicum).